The following is a 127-amino-acid chain: Mediator of RNA polymerase II transcription subunit 9 (127 aa).

Positions 95–119 (QKEQEIEAKKRVHRQLRQRVEEIAG) form a coiled coil.

The protein belongs to the Mediator complex subunit 9 family. In terms of assembly, component of the Mediator complex.

It localises to the nucleus. Its function is as follows. Component of the Mediator complex, a coactivator involved in the regulated transcription of nearly all RNA polymerase II-dependent genes. Mediator functions as a bridge to convey information from gene-specific regulatory proteins to the basal RNA polymerase II transcription machinery. Mediator is recruited to promoters by direct interactions with regulatory proteins and serves as a scaffold for the assembly of a functional preinitiation complex with RNA polymerase II and the general transcription factors. In Eremothecium gossypii (strain ATCC 10895 / CBS 109.51 / FGSC 9923 / NRRL Y-1056) (Yeast), this protein is Mediator of RNA polymerase II transcription subunit 9 (CSE2).